Here is a 343-residue protein sequence, read N- to C-terminus: Putative ALA-interacting subunit 2 (343 aa).

Residues 43 to 63 (PISVITVFMLMGFVFIPIGLI) traverse the membrane as a helical segment. N-linked (GlcNAc...) asparagine glycans are attached at residues N103, N178, N191, and N218. A helical transmembrane segment spans residues 301–321 (FLGITYLVVGSSSIVISIIFM).

This sequence belongs to the CDC50/LEM3 family. As to expression, expressed in roots, leaves, stems, flowers and siliques.

It localises to the membrane. This Arabidopsis thaliana (Mouse-ear cress) protein is Putative ALA-interacting subunit 2 (ALIS2).